The sequence spans 288 residues: MEIFKTAFLMVALMLVFIAVGGYVGGEQGMMIAFLMAAGMNIFSYFFSDKLVLKRYNAIPVDENNAHGLYEIVSRLTQKANLPMPKIYIIPEEVPNAFATGRNPSHAAVAVTEGLLKILNENEIEGVLAHELSHVRHYDILTGSVAAILAGAIAMVANFAKIGTLAGQNQNSQRNANPVIMLIIAVVMPLAATVIQMAISREREYKADKGAAYLTGHPEWLASALTKLENYSNSYVMQNASEQSAHMFIVNPFGSLTSKLSVLFRTHPSTSDRIAELQRLEQEIKRGM.

2 consecutive transmembrane segments (helical) span residues 6 to 26 and 28 to 48; these read TAFLMVALMLVFIAVGGYVGG and QGMMIAFLMAAGMNIFSYFFS. His-130 lines the Zn(2+) pocket. The active site involves Glu-131. His-134 serves as a coordination point for Zn(2+). 2 consecutive transmembrane segments (helical) span residues 140–160 and 179–199; these read ILTGSVAAILAGAIAMVANFA and VIMLIIAVVMPLAATVIQMAI. Position 204 (Glu-204) interacts with Zn(2+).

It belongs to the peptidase M48B family. Zn(2+) is required as a cofactor.

It localises to the cell inner membrane. This Campylobacter concisus (strain 13826) protein is Protease HtpX homolog.